A 235-amino-acid chain; its full sequence is Pro-opiomelanocortin (235 aa).

Residues M1–S26 form the signal peptide. At F87 the chain carries Phenylalanine amide. The interval G88–E128 is disordered. The segment covering G112 to E128 has biased composition (basic and acidic residues). S124 bears the N-acetylserine; in Corticotropin mark. The residue at position 136 (V136) is a Valine amide. N152 is a glycosylation site (N-linked (GlcNAc...) asparagine). Residue S154 is modified to Phosphoserine. A disordered region spans residues E169–M209. Residues D181–Y205 are compositionally biased toward basic and acidic residues.

It belongs to the POMC family. Specific enzymatic cleavages at paired basic residues yield the different active peptides. In terms of tissue distribution, ACTH and MSH are produced by the pituitary gland.

Its subcellular location is the secreted. In terms of biological role, stimulates the adrenal glands to release cortisol. Functionally, anorexigenic peptide. Increases the pigmentation of skin by increasing melanin production in melanocytes. Increases the pigmentation of skin by increasing melanin production in melanocytes. Its function is as follows. Endogenous orexigenic opiate. In terms of biological role, endogenous opiate. This chain is Pro-opiomelanocortin (Pomc), found in Rattus norvegicus (Rat).